We begin with the raw amino-acid sequence, 228 residues long: Odorant-binding protein 47 (228 aa).

Disulfide bonds link C60-C225, C73-C215, C74-C204, C88-C114, C110-C185, and C158-C195. Residue N117 is glycosylated (N-linked (GlcNAc...) asparagine).

This sequence belongs to the PBP/GOBP family. Post-translationally, glycosylated. As to expression, head without antennae (at protein level).

The protein localises to the secreted. Functionally, present in the aqueous fluid surrounding olfactory sensory dendrites and are thought to aid in the capture and transport of hydrophobic odorants into and through this fluid. Binds N-phenyl-1-naphthylamine, menthol, citronellal, 1-dodecanol, decanal, p-tert-butylbenzophenone, 4-hydroxy-4'-isopropylazobenzene, 2-pyrrolyl-p-methyl-azobenzene and indole. Expressed in mosquito head but barely detectable in antennae, which suggests that it may be present in mouth structures, such as palpi and proboscis, and may have a function in taste. The protein is Odorant-binding protein 47 of Anopheles gambiae (African malaria mosquito).